The primary structure comprises 93 residues: MICAVYKSLRKADSYLFVEKRNEFERVPEALMAMFGEPQLVMMLPIDKRDHLGFADIKKVKAELKDKGFYLQLPPPVVNLLEQHKKDIGFNPE.

A YcgL domain is found at 1 to 85 (MICAVYKSLR…PVVNLLEQHK (85 aa)).

The polypeptide is YcgL domain-containing protein swp_2294 (Shewanella piezotolerans (strain WP3 / JCM 13877)).